Reading from the N-terminus, the 479-residue chain is Glutamate--tRNA ligase (479 aa).

A 'HIGH' region motif is present at residues 21–31 (PSPTGYLHVGG). Positions 248–252 (KLSKR) match the 'KMSKS' region motif. Position 251 (lysine 251) interacts with ATP.

It belongs to the class-I aminoacyl-tRNA synthetase family. Glutamate--tRNA ligase type 1 subfamily. As to quaternary structure, monomer.

It is found in the cytoplasm. It catalyses the reaction tRNA(Glu) + L-glutamate + ATP = L-glutamyl-tRNA(Glu) + AMP + diphosphate. Functionally, catalyzes the attachment of glutamate to tRNA(Glu) in a two-step reaction: glutamate is first activated by ATP to form Glu-AMP and then transferred to the acceptor end of tRNA(Glu). The chain is Glutamate--tRNA ligase from Haemophilus ducreyi (strain 35000HP / ATCC 700724).